A 278-amino-acid polypeptide reads, in one-letter code: Shikimate dehydrogenase (NADP(+)) (278 aa).

Shikimate is bound by residues 19 to 21 (SRS) and Thr-66. The Proton acceptor role is filled by Lys-70. Residues Asn-91 and Asp-106 each contribute to the shikimate site. NADP(+) contacts are provided by residues 129–133 (GAGGA) and Phe-221. Tyr-223 is a shikimate binding site. Gly-242 is a binding site for NADP(+).

This sequence belongs to the shikimate dehydrogenase family. In terms of assembly, homodimer.

It carries out the reaction shikimate + NADP(+) = 3-dehydroshikimate + NADPH + H(+). Its pathway is metabolic intermediate biosynthesis; chorismate biosynthesis; chorismate from D-erythrose 4-phosphate and phosphoenolpyruvate: step 4/7. Its function is as follows. Involved in the biosynthesis of the chorismate, which leads to the biosynthesis of aromatic amino acids. Catalyzes the reversible NADPH linked reduction of 3-dehydroshikimate (DHSA) to yield shikimate (SA). The chain is Shikimate dehydrogenase (NADP(+)) from Anaeromyxobacter sp. (strain K).